Here is a 61-residue protein sequence, read N- to C-terminus: Small ribosomal subunit protein uS14 (61 aa).

4 residues coordinate Zn(2+): Cys-24, Cys-27, Cys-40, and Cys-43.

It belongs to the universal ribosomal protein uS14 family. Zinc-binding uS14 subfamily. Part of the 30S ribosomal subunit. Contacts proteins S3 and S10. Requires Zn(2+) as cofactor.

Binds 16S rRNA, required for the assembly of 30S particles and may also be responsible for determining the conformation of the 16S rRNA at the A site. The sequence is that of Small ribosomal subunit protein uS14 from Aliarcobacter butzleri (strain RM4018) (Arcobacter butzleri).